The chain runs to 330 residues: 2-phospho-L-lactate transferase (330 aa).

D49 contacts 7,8-didemethyl-8-hydroxy-5-deazariboflavin.

This sequence belongs to the CofD family. In terms of assembly, homodimer. It depends on Mg(2+) as a cofactor.

The enzyme catalyses (2S)-lactyl-2-diphospho-5'-guanosine + 7,8-didemethyl-8-hydroxy-5-deazariboflavin = oxidized coenzyme F420-0 + GMP + H(+). It participates in cofactor biosynthesis; coenzyme F420 biosynthesis. Functionally, catalyzes the transfer of the 2-phospholactate moiety from (2S)-lactyl-2-diphospho-5'-guanosine to 7,8-didemethyl-8-hydroxy-5-deazariboflavin (FO) with the formation of oxidized coenzyme F420-0 and GMP. The polypeptide is 2-phospho-L-lactate transferase (Haloarcula marismortui (strain ATCC 43049 / DSM 3752 / JCM 8966 / VKM B-1809) (Halobacterium marismortui)).